Reading from the N-terminus, the 265-residue chain is MSSTLSSHHAIALKASNLHLQLGGKTLLDNVDLEIMSGQITALLGPNGAGKSSLLKVLNGEIKPNSGSIEIFSRPKDHWPSELLAKHMGILPQHSTLSFSFLAHEVAELGAMPLAISNHQAQQLAAKNMVKVGVDHLANRLYPTLSGGEKQRVHFARVLTQLSHSGKQCILMLDEPTSALDLAHQHHTLEIAQALSQQGAAVIIVIHDLNLAAQYADRLIILNQGKIQADGTPWQVLTPTAVENVYGWPVQVIAHPEHNYPVILA.

The ABC transporter domain occupies Leu-13–Pro-249. Residue Gly-45–Ser-52 participates in ATP binding.

It belongs to the ABC transporter superfamily. Heme (hemin) importer (TC 3.A.1.14.5) family. The complex is composed of two ATP-binding proteins (HmuV), two transmembrane proteins (HmuU) and a solute-binding protein (HmuT).

It localises to the cell inner membrane. In terms of biological role, part of the ABC transporter complex HmuTUV involved in hemin import. Responsible for energy coupling to the transport system. The protein is Hemin import ATP-binding protein HmuV of Photobacterium damselae subsp. damselae (Listonella damsela).